The sequence spans 370 residues: UPF0284 protein PCC7424_2681 (370 aa).

This sequence belongs to the UPF0284 family.

This is UPF0284 protein PCC7424_2681 from Gloeothece citriformis (strain PCC 7424) (Cyanothece sp. (strain PCC 7424)).